Consider the following 161-residue polypeptide: Trivalent organoarsenical cleaving enzyme (161 aa).

The VOC domain occupies 2–119; sequence KYAHVGLNVT…DGNEWEFFYT (118 aa). 2 residues coordinate Fe(2+): His-5 and His-62. Roxarsone (III) contacts are provided by Cys-96 and Cys-97. Fe(2+) is bound at residue Glu-115.

Fe(2+) is required as a cofactor.

The enzyme catalyses methylarsonous acid + AH2 + O2 = arsenite + methanol + A + H(+). It carries out the reaction roxarsone (III) + AH2 + O2 = 4-hydroxy-3-nitrocyclohexa-2,5-dien-1-one + arsenite + A + H(+). It catalyses the reaction nitarsone (III) + AH2 + O2 = 4-nitrocyclohexa-2,5-dien-1-one + arsenite + A + H(+). The catalysed reaction is 4-aminophenylarsonous acid + AH2 + O2 = 4-aminocyclohexa-2,5-dien-1-one + arsenite + A. With respect to regulation, inhibited in vitro by reagents that chemically modify histidine residues (diethylpyrocarbonate (DEPC)), aspartate or glutamate residues (1-ethyl-3-(3-(dimethylamino)propyl) carbodiimide (EDC)), or cysteine residues (N-ethylmaleimide (NEM) or iodoacetamide (IAA)). Nonheme iron-dependent dioxygenase that can break carbon-arsenic bonds, playing a role in the detoxification of environmental organoarsenical compounds. Catalyzes the oxygen-dependent demethylation of highly toxic methylarsonous acid (MAs(III)) to arsenite, which can then be exported out of the cell. Can also cleave the C-As bond in several trivalent aromatic arsenicals, including roxarsone (III), nitarsone (III) and (4-aminophenyl)arsonous acid. Organoarsenical degradation by this enzyme is proposed to have a significant impact on the arsenic biogeocycle that maintains a balance between organic and inorganic species. This is Trivalent organoarsenical cleaving enzyme from Bacillus sp. (strain MD1).